The sequence spans 252 residues: 2-succinyl-6-hydroxy-2,4-cyclohexadiene-1-carboxylate synthase (252 aa).

This sequence belongs to the AB hydrolase superfamily. MenH family. In terms of assembly, monomer.

It carries out the reaction 5-enolpyruvoyl-6-hydroxy-2-succinyl-cyclohex-3-ene-1-carboxylate = (1R,6R)-6-hydroxy-2-succinyl-cyclohexa-2,4-diene-1-carboxylate + pyruvate. The protein operates within quinol/quinone metabolism; 1,4-dihydroxy-2-naphthoate biosynthesis; 1,4-dihydroxy-2-naphthoate from chorismate: step 3/7. Its pathway is quinol/quinone metabolism; menaquinone biosynthesis. Functionally, catalyzes a proton abstraction reaction that results in 2,5-elimination of pyruvate from 2-succinyl-5-enolpyruvyl-6-hydroxy-3-cyclohexene-1-carboxylate (SEPHCHC) and the formation of 2-succinyl-6-hydroxy-2,4-cyclohexadiene-1-carboxylate (SHCHC). The chain is 2-succinyl-6-hydroxy-2,4-cyclohexadiene-1-carboxylate synthase from Citrobacter koseri (strain ATCC BAA-895 / CDC 4225-83 / SGSC4696).